The following is a 70-amino-acid chain: ATP synthase subunit c (70 aa).

Helical transmembrane passes span Ile-4–Ile-24 and Ile-45–Phe-65.

This sequence belongs to the ATPase C chain family. In terms of assembly, F-type ATPases have 2 components, F(1) - the catalytic core - and F(0) - the membrane proton channel. F(1) has five subunits: alpha(3), beta(3), gamma(1), delta(1), epsilon(1). F(0) has three main subunits: a(1), b(2) and c(10-14). The alpha and beta chains form an alternating ring which encloses part of the gamma chain. F(1) is attached to F(0) by a central stalk formed by the gamma and epsilon chains, while a peripheral stalk is formed by the delta and b chains.

The protein resides in the cell membrane. Functionally, f(1)F(0) ATP synthase produces ATP from ADP in the presence of a proton or sodium gradient. F-type ATPases consist of two structural domains, F(1) containing the extramembraneous catalytic core and F(0) containing the membrane proton channel, linked together by a central stalk and a peripheral stalk. During catalysis, ATP synthesis in the catalytic domain of F(1) is coupled via a rotary mechanism of the central stalk subunits to proton translocation. Its function is as follows. Key component of the F(0) channel; it plays a direct role in translocation across the membrane. A homomeric c-ring of between 10-14 subunits forms the central stalk rotor element with the F(1) delta and epsilon subunits. This is ATP synthase subunit c from Staphylococcus aureus (strain Mu3 / ATCC 700698).